The following is a 251-amino-acid chain: Flap endonuclease Xni (251 aa).

Aspartate 104 provides a ligand contact to Mg(2+). In terms of domain architecture, 5'-3' exonuclease spans 160 to 250 (VQPQQLPDYW…DGNLQQLRLK (91 aa)). Residues leucine 171, alanine 172, proline 180, valine 182, and isoleucine 185 each coordinate K(+). The tract at residues 184 to 189 (GIGPKS) is interaction with DNA.

It belongs to the Xni family. Mg(2+) is required as a cofactor. It depends on K(+) as a cofactor.

Has flap endonuclease activity. During DNA replication, flap endonucleases cleave the 5'-overhanging flap structure that is generated by displacement synthesis when DNA polymerase encounters the 5'-end of a downstream Okazaki fragment. The protein is Flap endonuclease Xni of Escherichia fergusonii (strain ATCC 35469 / DSM 13698 / CCUG 18766 / IAM 14443 / JCM 21226 / LMG 7866 / NBRC 102419 / NCTC 12128 / CDC 0568-73).